The sequence spans 141 residues: Endoribonuclease YbeY (141 aa).

Residues H107, H111, and D117 each coordinate Zn(2+).

This sequence belongs to the endoribonuclease YbeY family. The cofactor is Zn(2+).

It is found in the cytoplasm. Single strand-specific metallo-endoribonuclease involved in late-stage 70S ribosome quality control and in maturation of the 3' terminus of the 16S rRNA. The protein is Endoribonuclease YbeY of Endomicrobium trichonymphae.